A 146-amino-acid chain; its full sequence is UPF0306 protein HD_1359 (146 aa).

This sequence belongs to the UPF0306 family.

The sequence is that of UPF0306 protein HD_1359 from Haemophilus ducreyi (strain 35000HP / ATCC 700724).